The primary structure comprises 1531 residues: La-related protein Larp4B (1531 aa).

Residues 112 to 147 are compositionally biased toward low complexity; sequence HTHVAHQQQQQQQQQTIQQHLHQQQQQQSPHPAQHL. Disordered regions lie at residues 112 to 148 and 239 to 263; these read HTHVAHQQQQQQQQQTIQQHLHQQQQQQSPHPAQHLT and QLPANGSADPQQGSHNAAGGEEPNI. Positions 262–351 constitute an HTH La-type RNA-binding domain; the sequence is NIPLDKLKQM…RPNRKRCIII (90 aa). The 76-residue stretch at 348–423 folds into the RRM domain; that stretch reads CIIILREISN…KPIMARIKPK (76 aa). 6 disordered regions span residues 533 to 605, 710 to 736, 748 to 768, 791 to 1135, 1160 to 1211, and 1251 to 1285; these read PLPP…QGGN, AHSHHLQAQQQLQGQTQQQHYQLASSS, TAPAPQQPGQHQHHLVVQQTQ, QEAG…SNQQ, DVVR…TPAL, and ASSKEEAAGAQQQQQQQLDKSNKTEDEMHPKQPSQ. A compositionally biased stretch (low complexity) spans 565–578; sequence YNNNHRGNPNNVGG. 2 stretches are compositionally biased toward low complexity: residues 754–768 and 810–826; these read QPGQHQHHLVVQQTQ and SSNMSASSSSSLATSMS. Over residues 860-884 the composition is skewed to polar residues; the sequence is SSPSNPHPQQHLMSSSTGSNVQSAG. Residues 945 to 959 are compositionally biased toward low complexity; the sequence is ALSSQQQQHHLTTGT. Over residues 966-975 the composition is skewed to basic residues; sequence HHYHHHHHHN. The span at 983 to 1004 shows a compositional bias: gly residues; sequence NSGGLGVSSGGSGGGGSGGGSG. Residues 1031–1045 are compositionally biased toward low complexity; it reads HQQQQQQQQQQQQQQ. Over residues 1068 to 1086 the composition is skewed to polar residues; it reads TSATAPHTPQATGGASLHN. The span at 1087 to 1115 shows a compositional bias: low complexity; it reads STTSSSSSTGLGQKQTLHQQQQQAPQQHQ. Residue Ser1123 is modified to Phosphoserine. Positions 1164 to 1173 are enriched in gly residues; sequence TGGGGGGGGK. Positions 1183–1200 are enriched in polar residues; the sequence is PQGQNQPHMAPNYQQHQP. Basic and acidic residues predominate over residues 1270 to 1280; sequence KSNKTEDEMHP. 2 positions are modified to phosphoserine: Ser1370 and Ser1413. Disordered regions lie at residues 1393–1418 and 1450–1531; these read KAAASSDSKETGSGGSTGTLSPTGSH and GGAS…ANNS. Composition is skewed to polar residues over residues 1467–1477 and 1502–1515; these read ATNTTQGSSAV and QHYGSATEHNTNAN.

Probable RNA binding protein. Negatively regulates myc at the protein level, via an unknown mechanism, and may therefore have a role in growth. Has no effect on myc mRNA levels. The polypeptide is La-related protein Larp4B (Drosophila melanogaster (Fruit fly)).